A 247-amino-acid polypeptide reads, in one-letter code: UPF0259 membrane protein BUAPTUC7_273 (247 aa).

Transmembrane regions (helical) follow at residues 20–40 (IGAIFFISIFATFMNILIDMF), 85–105 (IMESLISKTTLLGSIIILISF), 114–134 (IVSSIRTFFLFFPSLFILNFL), 137–157 (FIIQIGFMLLIIPGILLSIIL), 188–208 (IIGPGVLFWMCGKFILTMLLA), and 218–238 (LFLISNISMNILFSILIIYLF).

The protein belongs to the UPF0259 family.

The protein localises to the cell membrane. The polypeptide is UPF0259 membrane protein BUAPTUC7_273 (Buchnera aphidicola subsp. Acyrthosiphon pisum (strain Tuc7)).